The following is a 433-amino-acid chain: 3-deoxy-D-manno-octulosonic acid transferase (433 aa).

The helical; Signal-anchor transmembrane segment at 11–31 threads the bilayer; the sequence is TFLYDCFLIFAFMVGLPRILY. The active-site Proton acceptor is Glu-70. Residues 277 to 278, 317 to 319, and 344 to 347 each bind CMP; these read PR, IGW, and NLLE.

The protein belongs to the glycosyltransferase group 1 family. Glycosyltransferase 30 subfamily.

It localises to the cell inner membrane. The enzyme catalyses lipid IVA (E. coli) + CMP-3-deoxy-beta-D-manno-octulosonate = alpha-Kdo-(2-&gt;6)-lipid IVA (E. coli) + CMP + H(+). It catalyses the reaction alpha-Kdo-(2-&gt;6)-lipid IVA (E. coli) + CMP-3-deoxy-beta-D-manno-octulosonate = alpha-Kdo-(2-&gt;4)-alpha-Kdo-(2-&gt;6)-lipid IVA (E. coli) + CMP + H(+). It carries out the reaction alpha-Kdo-(2-&gt;4)-alpha-Kdo-(2-&gt;6)-lipid IVA (E. coli) + CMP-3-deoxy-beta-D-manno-octulosonate = alpha-Kdo-(2-&gt;8)-alpha-Kdo-(2-&gt;4)-alpha-Kdo-(2-&gt;6)-lipid IVA (E. coli) + CMP + H(+). The catalysed reaction is alpha-Kdo-(2-&gt;8)-alpha-Kdo-(2-&gt;4)-alpha-Kdo-(2-&gt;6)-lipid IVA (E. coli) + CMP-3-deoxy-beta-D-manno-octulosonate = alpha-Kdo-(2-&gt;8)-[alpha-Kdo-(2-&gt;4)]-alpha-Kdo-(2-&gt;4)-alpha-Kdo-(2-&gt;6)-lipid IVA + CMP + H(+). Its pathway is bacterial outer membrane biogenesis; LPS core biosynthesis. Involved in lipopolysaccharide (LPS) biosynthesis. Catalyzes the transfer of predominantly four 3-deoxy-D-manno-octulosonate (Kdo) residues from CMP-Kdo to lipid IV(A), the tetraacyldisaccharide-1,4'-bisphosphate precursor of lipid A. Thus generates the genus-specific LPS epitope of Chlamydia, composed of the trisaccharide alpha-Kdo-(2-&gt;8)-alpha-Kdo-(2-&gt;4)-alpha-Kdo. This chain is 3-deoxy-D-manno-octulosonic acid transferase (waaA), found in Chlamydophila psittaci (strain ATCC VR-125 / 6BC) (Chlamydia psittaci).